We begin with the raw amino-acid sequence, 268 residues long: Nickel import ATP-binding protein NikE (268 aa).

Residues 4–252 enclose the ABC transporter domain; that stretch reads LNVSGLSHHY…SSDAGRVLQN (249 aa). An ATP-binding site is contributed by 45 to 52; the sequence is GRSGCGKS.

It belongs to the ABC transporter superfamily. Nickel importer (TC 3.A.1.5.3) family. The complex is composed of two ATP-binding proteins (NikD and NikE), two transmembrane proteins (NikB and NikC) and a solute-binding protein (NikA).

Its subcellular location is the cell inner membrane. It catalyses the reaction Ni(2+)(out) + ATP + H2O = Ni(2+)(in) + ADP + phosphate + H(+). In terms of biological role, part of the ABC transporter complex NikABCDE involved in nickel import. Responsible for energy coupling to the transport system. The protein is Nickel import ATP-binding protein NikE of Shigella boydii serotype 4 (strain Sb227).